Consider the following 257-residue polypeptide: UPF0259 membrane protein WIGBR3650 (257 aa).

6 helical membrane passes run 23 to 43, 89 to 109, 122 to 142, 148 to 168, 190 to 210, and 223 to 243; these read IIFF…IFLP, LSSL…INTI, IILS…ISFL, ALML…PILI, IKTV…ILVI, and VKIF…IYMY.

Belongs to the UPF0259 family.

Its subcellular location is the cell membrane. In Wigglesworthia glossinidia brevipalpis, this protein is UPF0259 membrane protein WIGBR3650.